The following is a 586-amino-acid chain: Pyruvate kinase (586 aa).

Residue R32 participates in substrate binding. K(+)-binding residues include N34, S36, D66, and T67. ATP is bound at residue 34–37 (NFSH). 2 residues coordinate ATP: R73 and K156. E222 provides a ligand contact to Mg(2+). Substrate-binding residues include G245, D246, and T278. Mg(2+) is bound at residue D246.

This sequence belongs to the pyruvate kinase family. It in the C-terminal section; belongs to the PEP-utilizing enzyme family. Mg(2+) is required as a cofactor. It depends on K(+) as a cofactor.

It carries out the reaction pyruvate + ATP = phosphoenolpyruvate + ADP + H(+). The protein operates within carbohydrate degradation; glycolysis; pyruvate from D-glyceraldehyde 3-phosphate: step 5/5. The polypeptide is Pyruvate kinase (pyk) (Staphylococcus saprophyticus subsp. saprophyticus (strain ATCC 15305 / DSM 20229 / NCIMB 8711 / NCTC 7292 / S-41)).